Reading from the N-terminus, the 217-residue chain is MIKTVNIYDNPVLGVFATCTEDVAIVPIGTAGKAIDLLAEQLDVKVISTLINGSIVVGSLSKGNSNGFLISRDANVSDLKDVEVPVEVLPDMLTAVGNVILANDTAALVHPEMTDSSIEVISRVLGVDVHRGTIAGLGTVGMAGVVTNRGLLVHPMVTPDELSVLEDVFALPIELGTTNYGSQAVGSGLLANSKGYVAGSNTTGHELGRVEDALFFA.

It belongs to the eIF-6 family.

Functionally, binds to the 50S ribosomal subunit and prevents its association with the 30S ribosomal subunit to form the 70S initiation complex. The protein is Translation initiation factor 6 of Methanococcoides burtonii (strain DSM 6242 / NBRC 107633 / OCM 468 / ACE-M).